Reading from the N-terminus, the 842-residue chain is MutS protein homolog him-14 (842 aa).

The tract at residues 1–21 (MYSNKSFQRRQRQQVAESRSE) is disordered. Residue 588 to 595 (GPNMAGKS) coordinates ATP.

This sequence belongs to the DNA mismatch repair MutS family. In terms of assembly, heterooligomer of him-14 and msh-5.

It localises to the nucleus. Functionally, required during the pachytene stage of meiotic prophase for the formation of crossovers between homologous chromosomes. Together with msh-5 and zhp-3 plays a role in the activation of DNA damage-dependent apoptosis at the DNA damage checkpoint in pachytene cells. Not needed for pairing or synapsis. May promote crossing over by interfering with Holliday junction branch migration. Has no apparent role in DNA mismatch repair. In Caenorhabditis elegans, this protein is MutS protein homolog him-14.